A 476-amino-acid chain; its full sequence is Glucose-1-phosphate adenylyltransferase (476 aa).

Residues Tyr114, Gly179, 194 to 195 (EK), and Ser212 contribute to the alpha-D-glucose 1-phosphate site.

Belongs to the bacterial/plant glucose-1-phosphate adenylyltransferase family. As to quaternary structure, homotetramer.

The catalysed reaction is alpha-D-glucose 1-phosphate + ATP + H(+) = ADP-alpha-D-glucose + diphosphate. It functions in the pathway glycan biosynthesis; glycogen biosynthesis. Its function is as follows. Involved in the biosynthesis of ADP-glucose, a building block required for the elongation reactions to produce glycogen. Catalyzes the reaction between ATP and alpha-D-glucose 1-phosphate (G1P) to produce pyrophosphate and ADP-Glc. The chain is Glucose-1-phosphate adenylyltransferase from Yersinia pestis bv. Antiqua (strain Antiqua).